Here is a 245-residue protein sequence, read N- to C-terminus: E3 ubiquitin-protein ligase RNF138 (245 aa).

At A2 the chain carries N-acetylalanine. Residues 18-58 (CPVCQEVLKTPVRTAACQHVFCRKCFLTAMRESGIHCPLCR) form an RING-type zinc finger. C86, C89, H101, and C105 together coordinate Zn(2+). A C2HC RNF-type zinc finger spans residues 86-105 (CRCCAKQIKFYRMRHHYKSC). The disordered stretch occupies residues 128-153 (VGNSNRSETSASDNIETYQENTGSSG). C2H2-type zinc fingers lie at residues 157–180 (FKCP…NSNH) and 187–215 (VTCP…NQRH). Residues 225 to 243 (LQLDEETQYQTAVEESFQV) enclose the UIM domain.

In terms of assembly, interacts with NLK. Interacts with XRCC5/Ku80. Interacts with RBBP8/CtIP. In terms of processing, auto-ubiquitinated.

The protein localises to the chromosome. It carries out the reaction S-ubiquitinyl-[E2 ubiquitin-conjugating enzyme]-L-cysteine + [acceptor protein]-L-lysine = [E2 ubiquitin-conjugating enzyme]-L-cysteine + N(6)-ubiquitinyl-[acceptor protein]-L-lysine.. Its pathway is protein modification; protein ubiquitination. E3 ubiquitin-protein ligase involved in DNA damage response by promoting DNA resection and homologous recombination. Recruited to sites of double-strand breaks following DNA damage and specifically promotes double-strand break repair via homologous recombination. Two different, non-exclusive, mechanisms have been proposed. According to a report, regulates the choice of double-strand break repair by favoring homologous recombination over non-homologous end joining (NHEJ): acts by mediating ubiquitination of XRCC5/Ku80, leading to remove the Ku complex from DNA breaks, thereby promoting homologous recombination. According to another report, cooperates with UBE2Ds E2 ubiquitin ligases (UBE2D1, UBE2D2, UBE2D3 or UBE2D4) to promote homologous recombination by mediating ubiquitination of RBBP8/CtIP. Together with NLK, involved in the ubiquitination and degradation of TCF/LEF. Also exhibits auto-ubiquitination activity in combination with UBE2K. May act as a negative regulator in the Wnt/beta-catenin-mediated signaling pathway. The chain is E3 ubiquitin-protein ligase RNF138 (RNF138) from Bos taurus (Bovine).